We begin with the raw amino-acid sequence, 115 residues long: Large ribosomal subunit protein bL19 (115 aa).

Belongs to the bacterial ribosomal protein bL19 family.

This protein is located at the 30S-50S ribosomal subunit interface and may play a role in the structure and function of the aminoacyl-tRNA binding site. The protein is Large ribosomal subunit protein bL19 of Finegoldia magna (strain ATCC 29328 / DSM 20472 / WAL 2508) (Peptostreptococcus magnus).